The primary structure comprises 518 residues: Bifunctional purine biosynthesis protein PurH (518 aa).

Positions 1–144 constitute an MGS-like domain; sequence MSKRALISVS…KNHAAVTVVC (144 aa).

This sequence belongs to the PurH family.

It catalyses the reaction (6R)-10-formyltetrahydrofolate + 5-amino-1-(5-phospho-beta-D-ribosyl)imidazole-4-carboxamide = 5-formamido-1-(5-phospho-D-ribosyl)imidazole-4-carboxamide + (6S)-5,6,7,8-tetrahydrofolate. It carries out the reaction IMP + H2O = 5-formamido-1-(5-phospho-D-ribosyl)imidazole-4-carboxamide. The protein operates within purine metabolism; IMP biosynthesis via de novo pathway; 5-formamido-1-(5-phospho-D-ribosyl)imidazole-4-carboxamide from 5-amino-1-(5-phospho-D-ribosyl)imidazole-4-carboxamide (10-formyl THF route): step 1/1. It functions in the pathway purine metabolism; IMP biosynthesis via de novo pathway; IMP from 5-formamido-1-(5-phospho-D-ribosyl)imidazole-4-carboxamide: step 1/1. The sequence is that of Bifunctional purine biosynthesis protein PurH from Lactococcus lactis subsp. cremoris (strain MG1363).